The chain runs to 1253 residues: Cytoplasmic FMR1-interacting protein 1 (1253 aa).

S583 carries the post-translational modification Phosphoserine. An EIF4E-binding region spans residues 724–732; the sequence is DKRLRSECK. The residue at position 1234 (T1234) is a Phosphothreonine.

It belongs to the CYFIP family. As to quaternary structure, component of the WAVE1 complex composed of ABI2, CYFIP1 or CYFIP2, BRK1, NCKAP1 and WASF1/WAVE1. Within the complex, a heterodimer containing NCKAP1 and CYFIP1 interacts with a heterotrimer formed by WAVE1, ABI2 and BRK1. Component of the CYFIP1-EIF4E-FMR1 complex which is composed of CYFIP, EIF4E and FMR1. Interacts with FMR1 but does not bind to related proteins FXR1 or FXR2. Interaction with EIF4E stimulates FMR1 binding. Component of the WAVE2 complex composed of ABI1, CYFIP1/SRA1, NCKAP1/NAP1 (NCKAP1L/HEM1 in hematopoietic cells) and WASF2/WAVE2. Interacts with the active GTP-bound form of RAC1. Interacts through its C-terminus with the C-terminus of DPYSL2/CRMP2 which is necessary for DPYSL2-induced axon outgrowth. Interacts with NYAP1, NYAP2 and MYO16. Interacts with TMEM108 (via N-terminus); the interaction associates TMEM108 with the WAVE1 complex. As to expression, highly expressed in embryonic and adult developing nervous system.

It localises to the cytoplasm. It is found in the perinuclear region. The protein localises to the cell projection. The protein resides in the lamellipodium. Its subcellular location is the ruffle. It localises to the synapse. It is found in the synaptosome. Its function is as follows. Component of the CYFIP1-EIF4E-FMR1 complex which binds to the mRNA cap and mediates translational repression. In the CYFIP1-EIF4E-FMR1 complex this subunit is an adapter between EIF4E and FMR1. Promotes the translation repression activity of FMR1 in brain probably by mediating its association with EIF4E and mRNA. Regulates formation of membrane ruffles and lamellipodia. Plays a role in axon outgrowth. Binds to F-actin but not to RNA. Part of the WAVE complex that regulates actin filament reorganization via its interaction with the Arp2/3 complex. Actin remodeling activity is regulated by RAC1. Regulator of epithelial morphogenesis. May act as an invasion suppressor in cancers. As component of the WAVE1 complex, required for BDNF-NTRK2 endocytic trafficking and signaling from early endosomes. This is Cytoplasmic FMR1-interacting protein 1 from Mus musculus (Mouse).